The primary structure comprises 46 residues: Large ribosomal subunit protein bL34 (46 aa).

The segment covering 1–17 has biased composition (basic residues); sequence MTKRTLRGSVRKKKRTS. Residues 1–26 form a disordered region; sequence MTKRTLRGSVRKKKRTSGFRARMETP.

Belongs to the bacterial ribosomal protein bL34 family.

This is Large ribosomal subunit protein bL34 (rpmH) from Pseudanabaena sp. (strain PCC 6903).